The chain runs to 163 residues: NADH-quinone oxidoreductase subunit I (163 aa).

4Fe-4S ferredoxin-type domains follow at residues 53–83 (LRRY…IEAG) and 94–123 (TLYD…LTPE). [4Fe-4S] cluster is bound by residues Cys-63, Cys-66, Cys-69, Cys-73, Cys-103, Cys-106, Cys-109, and Cys-113.

The protein belongs to the complex I 23 kDa subunit family. As to quaternary structure, NDH-1 is composed of 14 different subunits. Subunits NuoA, H, J, K, L, M, N constitute the membrane sector of the complex. It depends on [4Fe-4S] cluster as a cofactor.

The protein localises to the cell inner membrane. The catalysed reaction is a quinone + NADH + 5 H(+)(in) = a quinol + NAD(+) + 4 H(+)(out). NDH-1 shuttles electrons from NADH, via FMN and iron-sulfur (Fe-S) centers, to quinones in the respiratory chain. The immediate electron acceptor for the enzyme in this species is believed to be ubiquinone. Couples the redox reaction to proton translocation (for every two electrons transferred, four hydrogen ions are translocated across the cytoplasmic membrane), and thus conserves the redox energy in a proton gradient. The sequence is that of NADH-quinone oxidoreductase subunit I from Coxiella burnetii (strain Dugway 5J108-111).